A 770-amino-acid polypeptide reads, in one-letter code: Elongation factor G, mitochondrial (770 aa).

A mitochondrion-targeting transit peptide spans 1–24 (MLKLSFRSLTSRLPRLSTLVVRGY). Positions 57-353 (KQIRNIGISA…AVCDYLPNPS (297 aa)) constitute a tr-type G domain. Residues 66-73 (AHIDSGKT), 151-155 (DTPGH), and 205-208 (NKMD) contribute to the GTP site.

Belongs to the TRAFAC class translation factor GTPase superfamily. Classic translation factor GTPase family. EF-G/EF-2 subfamily.

It is found in the mitochondrion. It participates in protein biosynthesis; polypeptide chain elongation. Functionally, mitochondrial GTPase that catalyzes the GTP-dependent ribosomal translocation step during translation elongation. During this step, the ribosome changes from the pre-translocational (PRE) to the post-translocational (POST) state as the newly formed A-site-bound peptidyl-tRNA and P-site-bound deacylated tRNA move to the P and E sites, respectively. Catalyzes the coordinated movement of the two tRNA molecules, the mRNA and conformational changes in the ribosome. This chain is Elongation factor G, mitochondrial (mef1), found in Schizosaccharomyces pombe (strain 972 / ATCC 24843) (Fission yeast).